The chain runs to 435 residues: GTPase Der (435 aa).

EngA-type G domains lie at 4–167 (PTLA…PSED) and 175–350 (IKFS…ENQT). GTP-binding positions include 10-17 (GRPNVGKS), 57-61 (DTGGI), 119-122 (NKVD), 181-188 (GRPNVGKS), 228-232 (DTAGI), and 293-296 (NKWD). Positions 351–435 (RRIQSSVLND…PIHIIARKRK (85 aa)) constitute a KH-like domain.

This sequence belongs to the TRAFAC class TrmE-Era-EngA-EngB-Septin-like GTPase superfamily. EngA (Der) GTPase family. As to quaternary structure, associates with the 50S ribosomal subunit.

GTPase that plays an essential role in the late steps of ribosome biogenesis. In Lacticaseibacillus casei (strain BL23) (Lactobacillus casei), this protein is GTPase Der.